The chain runs to 181 residues: Bifunctional protein PyrR (181 aa).

Substrate-binding positions include 41–42, 105–113, Arg138, and Val162; these read TR and DDVLYTGRT. The short motif at 101–113 is the PRPP-binding element; that stretch reads VILVDDVLYTGRT.

It belongs to the purine/pyrimidine phosphoribosyltransferase family. PyrR subfamily. In terms of assembly, homodimer and homohexamer; in equilibrium.

It carries out the reaction UMP + diphosphate = 5-phospho-alpha-D-ribose 1-diphosphate + uracil. Regulates transcriptional attenuation of the pyrimidine nucleotide (pyr) operon by binding in a uridine-dependent manner to specific sites on pyr mRNA. This disrupts an antiterminator hairpin in the RNA and favors formation of a downstream transcription terminator, leading to a reduced expression of downstream genes. Functionally, also displays a weak uracil phosphoribosyltransferase activity which is not physiologically significant. This Bacillus subtilis (strain 168) protein is Bifunctional protein PyrR (pyrR).